The primary structure comprises 101 residues: Ascorbate-specific PTS system EIIB component (101 aa).

The region spanning 3–96 is the PTS EIIB type-2 domain; it reads VRILAVCGNG…KLLEVIKAHF (94 aa). Catalysis depends on C9, which acts as the Phosphocysteine intermediate. Residue C9 is modified to Phosphocysteine.

Its subcellular location is the cytoplasm. It carries out the reaction N(pros)-phospho-L-histidyl-[protein] + L-ascorbate(out) = L-ascorbate 6-phosphate(in) + L-histidyl-[protein]. Its function is as follows. The phosphoenolpyruvate-dependent sugar phosphotransferase system (sugar PTS), a major carbohydrate active transport system, catalyzes the phosphorylation of incoming sugar substrates concomitantly with their translocation across the cell membrane. The enzyme II UlaABC PTS system is involved in ascorbate transport. This Shigella sonnei (strain Ss046) protein is Ascorbate-specific PTS system EIIB component (ulaB).